The sequence spans 54 residues: UPF0391 membrane protein BAV1230 (54 aa).

Helical transmembrane passes span 5-25 (AAVF…GIAA) and 27-47 (AAGI…LSVL).

This sequence belongs to the UPF0391 family.

It localises to the cell membrane. This chain is UPF0391 membrane protein BAV1230, found in Bordetella avium (strain 197N).